The sequence spans 357 residues: Ribosomal RNA large subunit methyltransferase F (357 aa).

A compositionally biased stretch (polar residues) spans 1–15; the sequence is MPKPPRSTQILSCNA. Positions 1 to 33 are disordered; it reads MPKPPRSTQILSCNAPNGKPKTQHPSARAKVKR.

This sequence belongs to the methyltransferase superfamily. METTL16/RlmF family.

It localises to the cytoplasm. It carries out the reaction adenosine(1618) in 23S rRNA + S-adenosyl-L-methionine = N(6)-methyladenosine(1618) in 23S rRNA + S-adenosyl-L-homocysteine + H(+). Its function is as follows. Specifically methylates the adenine in position 1618 of 23S rRNA. This Shewanella putrefaciens (strain CN-32 / ATCC BAA-453) protein is Ribosomal RNA large subunit methyltransferase F.